We begin with the raw amino-acid sequence, 270 residues long: MTARDFLEFRERLAPASGFQSAQLREIEILLGLEDTQRISIGNGCSYRDALKLPGGAPSSSAQRVEARAADGPSFKHCLYDWLSRVPIDGSNAPADITRFLEAYLASLRAENDRRLKLASSGLAAAEIEQLRARYAAEDAGAQAFLLAEDDPQASDAERETRRAGRAAMLFIESYRELPQLAWPHALLESVLELEQAMLIWRQRHARMVERFIGRRIGTGGSSGVDYLDQTARYRIFTELWTVRSLLLRKAAVPQIRSSAGYGFVMEGFA.

This sequence belongs to the tryptophan 2,3-dioxygenase family.

This chain is Tryptophan 2,3-dioxygenase-like protein, found in Xanthomonas campestris pv. campestris (strain 8004).